A 465-amino-acid chain; its full sequence is Cysteine--tRNA ligase (465 aa).

Cys-28 is a Zn(2+) binding site. The short motif at 30–40 (PTVYNYIHVGN) is the 'HIGH' region element. Residues Cys-208, His-233, and Glu-237 each contribute to the Zn(2+) site. The short motif at 265–269 (KMSKS) is the 'KMSKS' region element. Lys-268 contacts ATP.

Belongs to the class-I aminoacyl-tRNA synthetase family. As to quaternary structure, monomer. Requires Zn(2+) as cofactor.

It is found in the cytoplasm. It carries out the reaction tRNA(Cys) + L-cysteine + ATP = L-cysteinyl-tRNA(Cys) + AMP + diphosphate. The sequence is that of Cysteine--tRNA ligase from Exiguobacterium sp. (strain ATCC BAA-1283 / AT1b).